The following is a 216-amino-acid chain: Maintenance of carboxysome distribution protein A (216 aa).

G16, G17, G19, K20, T21, T22, and Q45 together coordinate ATP. Mg(2+) is bound at residue T21.

It belongs to the ParA family. McdA subfamily. As to quaternary structure, self-associates, associates with McdB.

It localises to the cytoplasm. Its subcellular location is the nucleoid. The catalysed reaction is ATP + H2O = ADP + phosphate + H(+). McdA and McdB together mediate carboxysome positioning on the nucleoid and prevent their aggregation in the cell. McdA is an ATPase that forms dynamic gradients on the nucleoid in response to adapter protein McdB, which associates with carboxysomes. The interplay between McdA gradients on the nucleoid and McdB-bound carboxysomes result in the equal spacing of Cbs along the cell length. In terms of biological role, incorrect positioning (aggregation) of carboxysomes results in reduced CO(2) fixation by encapsulated form 1 ribulose-1,5-bisphosphate carboxylase (RuBisCO, cbbL/cbbS), which leads to slower growth. The chain is Maintenance of carboxysome distribution protein A from Halothiobacillus neapolitanus (strain ATCC 23641 / c2) (Thiobacillus neapolitanus).